The following is a 226-amino-acid chain: uncharacterized protein (226 aa).

The N-acetyltransferase domain occupies 18 to 219 (LTIRNYTETD…YGVLMEWKNV (202 aa)).

This sequence belongs to the acetyltransferase family.

This is an uncharacterized protein from Bacillus subtilis (strain 168).